We begin with the raw amino-acid sequence, 97 residues long: Large ribosomal subunit protein uL23 (97 aa).

This sequence belongs to the universal ribosomal protein uL23 family. Part of the 50S ribosomal subunit. Contacts protein L29, and trigger factor when it is bound to the ribosome.

In terms of biological role, one of the early assembly proteins it binds 23S rRNA. One of the proteins that surrounds the polypeptide exit tunnel on the outside of the ribosome. Forms the main docking site for trigger factor binding to the ribosome. In Lactococcus lactis subsp. cremoris (strain SK11), this protein is Large ribosomal subunit protein uL23.